Here is a 700-residue protein sequence, read N- to C-terminus: Dipeptidyl aminopeptidase 1 (700 aa).

The N-terminal stretch at 1–27 is a signal peptide; that stretch reads MAKRIFSVSFLLVLLNVLHICIKFSVA. N52, N144, N265, N337, and N373 each carry an N-linked (GlcNAc...) asparagine glycan. A propeptide spanning residues 210–369 is cleaved from the precursor; sequence DNVNEIKHLD…SPKRELEINE (160 aa). 2 disulfides stabilise this stretch: C395–C446 and C439–C478. Residue C398 is part of the active site. A Sulfothreonine modification is found at T416. Positions 450 and 452 each coordinate chloride. Residues N481, N490, and N507 are each glycosylated (N-linked (GlcNAc...) asparagine). Y549 is a binding site for chloride. A glycan (N-linked (GlcNAc...) asparagine) is linked at N615. Residues H624 and N648 contribute to the active site. N667 carries N-linked (GlcNAc...) asparagine glycosylation.

This sequence belongs to the peptidase C1 family. In terms of assembly, monomer. Chloride serves as cofactor.

Its subcellular location is the vacuole lumen. It is found in the parasitophorous vacuole lumen. It carries out the reaction Release of an N-terminal dipeptide, Xaa-Yaa-|-Zaa-, except when Xaa is Arg or Lys, or Yaa or Zaa is Pro.. In terms of biological role, thiol protease that cleaves dipeptides from the N-terminus of protein substrates. Active against a broad range of dipeptide substrates composed of both polar and hydrophobic amino acids. Proline cannot occupy the P1 position and arginine or lysine cannot occupy the P2 position of the substrate. Involved in host hemoglobin degradation by generating dipeptides from hemoglobin-derived oligopeptides. This is Dipeptidyl aminopeptidase 1 from Plasmodium falciparum (isolate 3D7).